Consider the following 422-residue polypeptide: Histidine--tRNA ligase (422 aa).

This sequence belongs to the class-II aminoacyl-tRNA synthetase family. Homodimer.

It is found in the cytoplasm. It catalyses the reaction tRNA(His) + L-histidine + ATP = L-histidyl-tRNA(His) + AMP + diphosphate + H(+). The protein is Histidine--tRNA ligase of Nocardia farcinica (strain IFM 10152).